Reading from the N-terminus, the 131-residue chain is uncharacterized protein (131 aa).

Residues 101-131 (SWWPPSGVVRGGPSSWPPSGVAEPREALGLP) are disordered.

This is an uncharacterized protein from Homo sapiens (Human).